Consider the following 576-residue polypeptide: Outer capsid protein VP4 (576 aa).

Its subcellular location is the virion. This Banna virus (BAV) protein is Outer capsid protein VP4 (Segment-4).